We begin with the raw amino-acid sequence, 291 residues long: tRNA-uridine aminocarboxypropyltransferase 1 (291 aa).

The disordered stretch occupies residues 158–181; sequence KNSAYEPSSKRPKFSPENDKNTYE. A compositionally biased stretch (basic and acidic residues) spans 171–181; sequence FSPENDKNTYE. A DXTW motif is present at residues 199–202; that stretch reads DSTW.

It belongs to the TDD superfamily. DTWD1 family.

It localises to the nucleus. The catalysed reaction is a uridine in tRNA + S-adenosyl-L-methionine = a 3-[(3S)-3-amino-3-carboxypropyl]uridine in tRNA + S-methyl-5'-thioadenosine + H(+). Its function is as follows. Catalyzes the formation of 3-(3-amino-3-carboxypropyl)uridine (acp3U) at position 20 in the D-loop of several cytoplasmic tRNAs (acp3U(20)). The protein is tRNA-uridine aminocarboxypropyltransferase 1 of Xenopus laevis (African clawed frog).